A 310-amino-acid polypeptide reads, in one-letter code: Methionyl-tRNA formyltransferase (310 aa).

109-112 (SLLP) contributes to the (6S)-5,6,7,8-tetrahydrofolate binding site. The tract at residues 283-310 (QPQGKKAMPAADWARGARIGDGERFGDD) is disordered. Positions 300 to 310 (RIGDGERFGDD) are enriched in basic and acidic residues.

The protein belongs to the Fmt family.

It carries out the reaction L-methionyl-tRNA(fMet) + (6R)-10-formyltetrahydrofolate = N-formyl-L-methionyl-tRNA(fMet) + (6S)-5,6,7,8-tetrahydrofolate + H(+). Attaches a formyl group to the free amino group of methionyl-tRNA(fMet). The formyl group appears to play a dual role in the initiator identity of N-formylmethionyl-tRNA by promoting its recognition by IF2 and preventing the misappropriation of this tRNA by the elongation apparatus. The polypeptide is Methionyl-tRNA formyltransferase (Thermobifida fusca (strain YX)).